Reading from the N-terminus, the 293-residue chain is Putative ABC transporter ATP-binding protein AF_0731 (293 aa).

The region spanning 2–236 (IEAVDLHFCY…RKLGIRSFSL (235 aa)) is the ABC transporter domain. 34–41 (GRNGAGKT) contributes to the ATP binding site.

The protein belongs to the ABC transporter superfamily.

The protein resides in the cell membrane. In terms of biological role, probably part of an ABC transporter complex. Responsible for energy coupling to the transport system. The protein is Putative ABC transporter ATP-binding protein AF_0731 of Archaeoglobus fulgidus (strain ATCC 49558 / DSM 4304 / JCM 9628 / NBRC 100126 / VC-16).